Consider the following 305-residue polypeptide: MKPRVLVIAGPTASGKSALALDLAVALDGEIICADSLTVYRGLDIGSAKPTAEQQRQIPHHLLDIREPTEPFTAADFKLAAKAAIAAICQRGKRPILAGGTGLYLRALLRGLNDAPGEDPVLRETLRKRLECEGAETLLAELAKVDPDTSQRLHPNNRNRIIRALEVFQTTGIPLSQFQAEHGFADSPYDSLQFCLDLPRPELYQRIDDRVDAMLAAGLVAEVQGLLQSGVPADCKPLQAIGYKEVLAHLQGEYDHNEMVRLIKRNTRHFAKRQLTWFRSEPAMQWVAYPENSATIHSAAATFFA.

An ATP-binding site is contributed by 10–17; the sequence is GPTASGKS. Residue 12-17 participates in substrate binding; it reads TASGKS. Residues 35 to 38 form an interaction with substrate tRNA region; it reads DSLT.

This sequence belongs to the IPP transferase family. As to quaternary structure, monomer. Mg(2+) is required as a cofactor.

The catalysed reaction is adenosine(37) in tRNA + dimethylallyl diphosphate = N(6)-dimethylallyladenosine(37) in tRNA + diphosphate. Functionally, catalyzes the transfer of a dimethylallyl group onto the adenine at position 37 in tRNAs that read codons beginning with uridine, leading to the formation of N6-(dimethylallyl)adenosine (i(6)A). This is tRNA dimethylallyltransferase 1 from Trichlorobacter lovleyi (strain ATCC BAA-1151 / DSM 17278 / SZ) (Geobacter lovleyi).